We begin with the raw amino-acid sequence, 558 residues long: Laccase-4 (558 aa).

The signal sequence occupies residues 1-24 (MGSHMVWFLFLVSFFSVFPAPSES). Plastocyanin-like domains are found at residues 32–148 (NVVM…PKRG) and 158–308 (NEKV…YSGT). 2 N-linked (GlcNAc...) asparagine glycosylation sites follow: N37 and N78. Cu cation-binding residues include H82 and H84. N-linked (GlcNAc...) asparagine glycosylation is present at N114. Cu cation is bound by residues H127 and H129. Residues N187, N296, N323, N330, N373, N383, N400, N418, and N441 are each glycosylated (N-linked (GlcNAc...) asparagine). The Plastocyanin-like 3 domain maps to 408–542 (DFPKNPPHVF…KMAFLVENGK (135 aa)). Cu cation is bound by residues H459, H462, and H464. Residue N479 is glycosylated (N-linked (GlcNAc...) asparagine). 4 residues coordinate Cu cation: H521, C522, H523, and H527. N-linked (GlcNAc...) asparagine glycosylation occurs at N545.

Belongs to the multicopper oxidase family. It depends on Cu cation as a cofactor. In terms of tissue distribution, ubiquitous, with higher levels in the inflorescence stem.

It localises to the secreted. The protein resides in the extracellular space. It is found in the apoplast. It carries out the reaction 4 hydroquinone + O2 = 4 benzosemiquinone + 2 H2O. Functionally, lignin degradation and detoxification of lignin-derived products. Required for secondary xylem cell wall lignification. In Arabidopsis thaliana (Mouse-ear cress), this protein is Laccase-4 (IRX12).